A 1507-amino-acid chain; its full sequence is Protein similar (1507 aa).

Positions 1-85 are disordered; it reads MVSLIDTIEA…KSRDAARCRR (85 aa). Over residues 26-49 the composition is skewed to low complexity; sequence SASSSSCSSSFSSSPPSSSVGSPS. Residues 72–85 show a composition bias toward basic and acidic residues; it reads KRKEKSRDAARCRR. The 54-residue stretch at 72-125 folds into the bHLH domain; that stretch reads KRKEKSRDAARCRRSKETEIFMELSAALPLKTDDVNQLDKASVMRITIAFLKIR. 2 consecutive PAS domains span residues 167-240 and 307-377; these read NGAE…LAQK and PHPS…LSKG. The region spanning 381–422 is the PAC domain; that stretch reads TSRYRFLGKYGGYCWILSQATIVYDKLKPQSVVCVNYVISNL. 4 disordered regions span residues 433-459, 541-588, 706-832, and 900-951; these read QQTA…KAAD, HSPG…PPPT, TCST…CSPN, and YAGN…QAAV. Basic and acidic residues predominate over residues 439-459; the sequence is EQKEQHHQAAETEKEPEKAAD. The segment covering 548–559 has biased composition (polar residues); it reads ITAQLLSGSSSG. A compositionally biased stretch (pro residues) spans 578 to 588; sequence SPAPPLTPPPT. The segment at 692 to 863 is ODD; sequence TCLLPEDINS…IDDDMPLLTE (172 aa). A compositionally biased stretch (polar residues) spans 706–717; it reads TCSTTASGQHYQ. Composition is skewed to low complexity over residues 718 to 745 and 754 to 777; these read SPSS…LSPL and SNPS…QQQH. Positions 803–818 are enriched in polar residues; it reads DTSCSQHLHSPSITSK. Low complexity-rich tracts occupy residues 823–832, 907–918, and 926–951; these read SSLPSLCSPN, QQQQQQPQLQQQ, and SSPA…QAAV. Positions 880-908 form a coiled coil; sequence KEIDAIQQQLQQLQQQHHQQYAGNTGYQQ. Coiled-coil stretches lie at residues 982–1054 and 1110–1162; these read AEEC…YDVQ and QLLQ…QLQQ. 3 disordered regions span residues 1204 to 1228, 1251 to 1287, and 1356 to 1460; these read PQQQ…VESK, KDPA…QSNS, and FGGS…KTSI. Residues 1413-1423 are compositionally biased toward polar residues; the sequence is SSTSNSTNQAE.

As to quaternary structure, efficient DNA binding requires dimerization with another bHLH protein. Interacts with Vhl. As to expression, ubiquitously expressed in the embryo.

The protein resides in the cytoplasm. It is found in the nucleus. Functionally, functions as a transcriptional regulator of the adaptive response to hypoxia. Binds to core DNA sequence 5'-[AG]CGTG-3' within the hypoxia response element (HRE) of target gene promoters. The chain is Protein similar (sima) from Drosophila melanogaster (Fruit fly).